The chain runs to 118 residues: Non-specific lipid-transfer protein 2A (118 aa).

Residues 1-26 (MARAQLVLVALVAAALLLAGPHTTMA) form the signal peptide. Disulfide bonds link Cys30–Cys77, Cys40–Cys54, Cys55–Cys100, and Cys75–Cys114.

This sequence belongs to the plant LTP family.

In terms of biological role, plant non-specific lipid-transfer proteins transfer phospholipids as well as galactolipids across membranes. May play a role in wax or cutin deposition in the cell walls of expanding epidermal cells and certain secretory tissues. The protein is Non-specific lipid-transfer protein 2A (LTP2-A) of Oryza sativa subsp. japonica (Rice).